The chain runs to 397 residues: Tryptophan synthase beta chain (397 aa).

Residue K89 is modified to N6-(pyridoxal phosphate)lysine.

This sequence belongs to the TrpB family. Tetramer of two alpha and two beta chains. Requires pyridoxal 5'-phosphate as cofactor.

The catalysed reaction is (1S,2R)-1-C-(indol-3-yl)glycerol 3-phosphate + L-serine = D-glyceraldehyde 3-phosphate + L-tryptophan + H2O. It participates in amino-acid biosynthesis; L-tryptophan biosynthesis; L-tryptophan from chorismate: step 5/5. In terms of biological role, the beta subunit is responsible for the synthesis of L-tryptophan from indole and L-serine. This Leptospira interrogans serogroup Icterohaemorrhagiae serovar copenhageni (strain Fiocruz L1-130) protein is Tryptophan synthase beta chain.